A 361-amino-acid polypeptide reads, in one-letter code: MDRAPVTTGPLDMPIMHDSDRYDFVKDIGSGNFGVARLMRDKLTKELVAVKYIERGDKIDENVQREIINHRSLRHPNIVRFKEVILTPTHLAIIMEYASGGELYERICNAGRFSEDEARFFFQQLLSGVSYCHSMQICHRDLKLENTLLDGSPAPRLKICDFGYSKSSVLHSQPKSTVGTPAYIAPEVLLRQEYDGKIADVWSCGVTLYVMLVGAYPFEDPEEPRDYRKTIQRILSVKYSIPDDIRISPECCHLISRIFVADPATRISIPEIKTHSWFLKNLPADLMNESNTGSQFQEPEQPMQSLDTIMQIISEATIPAVRNRCLDDFMTDNLDLDDDMDDFDSESEIDIDSSGEIVYAL.

Residues 22-278 enclose the Protein kinase domain; it reads YDFVKDIGSG…IPEIKTHSWF (257 aa). Residues 28-36 and lysine 51 each bind ATP; that span reads IGSGNFGVA. The active-site Proton acceptor is the aspartate 141.

This sequence belongs to the protein kinase superfamily. Ser/Thr protein kinase family. Interacts with ABI1. Interacts with I-2 and TOPP1. Interacts with FREE1 (via C-terminus). In terms of processing, autophosphorylated in vitro. In terms of tissue distribution, expressed at low levels in seeds, seedlings, roots (especially in tips), stems, leaves, shoots, flowers and siliques.

It carries out the reaction L-seryl-[protein] + ATP = O-phospho-L-seryl-[protein] + ADP + H(+). The catalysed reaction is L-threonyl-[protein] + ATP = O-phospho-L-threonyl-[protein] + ADP + H(+). Its activity is regulated as follows. Activated by autophosphorylation of its activation loop. Its function is as follows. Together with SRK2D, key component and activator of the abscisic acid (ABA) signaling pathway that regulates numerous ABA responses, such as seed germination, Pro accumulation, root growth inhibition, dormancy and seedling growth, and, to a lesser extent, stomatal closure. In response to ABA, phosphorylates the ESCRT-I complex component FREE1, which is required for ABA-induced FREE1 nuclear import. The chain is Serine/threonine-protein kinase SRK2I (SRK2I) from Arabidopsis thaliana (Mouse-ear cress).